The chain runs to 700 residues: Pentatricopeptide repeat-containing protein At3g26540 (700 aa).

17 PPR repeats span residues 95–125, 126–160, 161–195, 196–226, 227–261, 262–296, 297–327, 328–362, 363–389, 394–428, 429–459, 461–495, 497–529, 530–560, 561–595, 596–626, and 632–662; these read PIFLLNRAIEAYGKCGCVDDARELFEEMPER, DGGSWNAVITACAQNGVSDEVFRMFRRMNRDGVRA, TETSFAGVLKSCGLILDLRLLRQLHCAVVKYGYSG, NVDLETSIVDVYGKCRVMSDARRVFDEIVNP, SDVSWNVIVRRYLEMGFNDEAVVMFFKMLELNVRP, LNHTVSSVMLACSRSLALEVGKVIHAIAVKLSVVA, DTVVSTSVFDMYVKCDRLESARRVFDQTRSK, DLKSWTSAMSGYAMSGLTREARELFDLMPERNIVS, WNAMLGGYVHAHEWDEALDFLTLMRQE, DNVTLVWILNVCSGISDVQMGKQAHGFIYRHGYDT, NVIVANALLDMYGKCGTLQSANIWFRQMSEL, DEVSWNALLTGVARVGRSEQALSFFEGMQVEAKPS, YTLATLLAGCANIPALNLGKAIHGFLIRDGYKI, DVVIRGAMVDMYSKCRCFDYAIEVFKEAATR, DLILWNSIIRGCCRNGRSKEVFELFMLLENEGVKP, DHVTFLGILQACIREGHVELGFQYFSSMSTK, and QVEHYDCMIELYCKYGCLHQLEEFLLLMPFD.

It belongs to the PPR family. PCMP-A subfamily.

The chain is Pentatricopeptide repeat-containing protein At3g26540 (PCMP-A5) from Arabidopsis thaliana (Mouse-ear cress).